The sequence spans 192 residues: Glycerol-3-phosphate acyltransferase (192 aa).

A run of 5 helical transmembrane segments spans residues 1–21 (MFIA…AYIL), 49–69 (GLAG…IYSL), 80–100 (ELCI…WLKF), 110–130 (IGVI…SWLF), and 143–163 (IVSI…VVAL).

Belongs to the PlsY family. Probably interacts with PlsX.

It localises to the cell inner membrane. It carries out the reaction an acyl phosphate + sn-glycerol 3-phosphate = a 1-acyl-sn-glycero-3-phosphate + phosphate. It participates in lipid metabolism; phospholipid metabolism. Catalyzes the transfer of an acyl group from acyl-phosphate (acyl-PO(4)) to glycerol-3-phosphate (G3P) to form lysophosphatidic acid (LPA). This enzyme utilizes acyl-phosphate as fatty acyl donor, but not acyl-CoA or acyl-ACP. This is Glycerol-3-phosphate acyltransferase from Anaplasma phagocytophilum (strain HZ).